A 254-amino-acid polypeptide reads, in one-letter code: MSTLFISDIHLCSDRPDMTAALVRFLERDAPGADALYVLGDLFEFWIGDDDPNPLHHAIADAFAALRQRGVSIYFIHGNRDFLLGRQFAKRSGMTLLADPCVIDLYGERVLLSHGDLLCTLDLGYQKLRRITQLKWLRWLFLRLPLTRRLAIACKMRGQSQMENVQKSQTIMDVTPAAVDALLRQHGCQLLIHGHTHRPAIHDFTLDGQPARRIVLGDWFEQGSVLVCSPGEQRLEQRTLPSLNPAGAHESDNL.

Residues aspartate 8, histidine 10, aspartate 41, asparagine 79, and histidine 114 each coordinate Mn(2+). 79 to 80 (NR) contacts substrate. Residues aspartate 122, serine 160, asparagine 164, lysine 167, and histidine 195 each coordinate substrate. Mn(2+) is bound by residues histidine 195 and histidine 197.

This sequence belongs to the LpxH family. Mn(2+) is required as a cofactor.

The protein resides in the cell inner membrane. The enzyme catalyses UDP-2-N,3-O-bis[(3R)-3-hydroxytetradecanoyl]-alpha-D-glucosamine + H2O = 2-N,3-O-bis[(3R)-3-hydroxytetradecanoyl]-alpha-D-glucosaminyl 1-phosphate + UMP + 2 H(+). Its pathway is glycolipid biosynthesis; lipid IV(A) biosynthesis; lipid IV(A) from (3R)-3-hydroxytetradecanoyl-[acyl-carrier-protein] and UDP-N-acetyl-alpha-D-glucosamine: step 4/6. In terms of biological role, hydrolyzes the pyrophosphate bond of UDP-2,3-diacylglucosamine to yield 2,3-diacylglucosamine 1-phosphate (lipid X) and UMP by catalyzing the attack of water at the alpha-P atom. Involved in the biosynthesis of lipid A, a phosphorylated glycolipid that anchors the lipopolysaccharide to the outer membrane of the cell. This is UDP-2,3-diacylglucosamine hydrolase from Aeromonas salmonicida (strain A449).